The sequence spans 201 residues: ATP-dependent Clp protease proteolytic subunit (201 aa).

Catalysis depends on Ser-105, which acts as the Nucleophile. The active site involves His-130.

It belongs to the peptidase S14 family. Fourteen ClpP subunits assemble into 2 heptameric rings which stack back to back to give a disk-like structure with a central cavity, resembling the structure of eukaryotic proteasomes.

The protein localises to the cytoplasm. The catalysed reaction is Hydrolysis of proteins to small peptides in the presence of ATP and magnesium. alpha-casein is the usual test substrate. In the absence of ATP, only oligopeptides shorter than five residues are hydrolyzed (such as succinyl-Leu-Tyr-|-NHMec, and Leu-Tyr-Leu-|-Tyr-Trp, in which cleavage of the -Tyr-|-Leu- and -Tyr-|-Trp bonds also occurs).. Functionally, cleaves peptides in various proteins in a process that requires ATP hydrolysis. Has a chymotrypsin-like activity. Plays a major role in the degradation of misfolded proteins. This is ATP-dependent Clp protease proteolytic subunit from Acinetobacter baylyi (strain ATCC 33305 / BD413 / ADP1).